We begin with the raw amino-acid sequence, 506 residues long: MEPEPLDPRAIGFMRRNLAMLRQTPMSVVLAGLILLASIYFPRFMFKSQMARFPLILEHLSSEQRRARFLVGAKALYKDGSQKFRGMAYRMQTLDEQQIVLPLSALTELRKAPEEVLSFYDMFSKVVDTIKRDLTPKLTKITSKICDEVDAALDTYLPSHGKWTEINVSKTALDIIAKVSAHLFIGGDVANDPGYLECTKNFTVHLGEATRAIKVTRVWLRPFLAPRLPEVKRLLETRTKLRSYVKRVIEEREAKIKNPDWVPPDDMMQWLLDRADRQKDTLEDCTAAQVLLILGTINASMQTLIAILHTLAVTPEYVEPLREEIRNTLNSDGSIPVSAMKEFGKMDSYFKEVGMHFPVIIEPYFRRVRKGFTLSNGQYLPPGVAIVIANPLVTDSKYDTFDGFRHYKLREASAQKDKPNHRWLIANETEFRWGYDNHVCPGRFYAHNLLKIIFARIVENYDIKMPGNVEGIEARYPMVEHGNVVMEPRDKPLLLRRVKSHQGHVD.

The helical transmembrane segment at 26–46 threads the bilayer; sequence MSVVLAGLILLASIYFPRFMF. Residues asparagine 167, asparagine 201, asparagine 298, and asparagine 427 are each glycosylated (N-linked (GlcNAc...) asparagine). Heme is bound at residue cysteine 440.

This sequence belongs to the cytochrome P450 family. Requires heme as cofactor.

The protein resides in the membrane. The protein operates within phytotoxin biosynthesis. Cytochrome P450 monooxygenase; part of the gene cluster that mediates the biosynthesis of the phytotoxin tentoxin, an inhibitor the F1-ATPase activity of chloroplasts, resulting in chlorosis in sensitive plants. Tentoxin is a cyclic tetrapeptide that consists of four amino acid residues: glycine (Gly), alanine (Ala), leucine (Leu), and dehydrophenylalanine (DPhe). In addition, both the Ala and DPhe residues are N-methylated. The nonribosomal peptide synthetase TES assembles tentoxin from the four substrate amino acids. The adenylation domains of each of the 4 modules are responsible for the activation of Gly, Ala, Leu and DPhe, respectively. In addition, the N-methyltransferase domains in the second and fourth modules of TES could be responsible for N-methylation of Ala and DPhe residues. Finally, the condensation domain located in the termination module probably catalyzes the formation of the intramolecular macrocyclization and then the release of tentoxin. The cytochrome P450 monooxygenase TES1 is predicted to be involved in the formation of DPhe. The chain is Cytochrome P450 monooxygenase TES1 from Alternaria alternata (Alternaria rot fungus).